We begin with the raw amino-acid sequence, 147 residues long: CRISP-1 (147 aa).

The protein belongs to the CRISP family. In terms of tissue distribution, expressed by the venom gland.

The protein resides in the secreted. This is CRISP-1 from Phoneutria keyserlingi (Brazilian wandering spider).